A 218-amino-acid chain; its full sequence is N-(5'-phosphoribosyl)anthranilate isomerase (218 aa).

The protein belongs to the TrpF family.

The enzyme catalyses N-(5-phospho-beta-D-ribosyl)anthranilate = 1-(2-carboxyphenylamino)-1-deoxy-D-ribulose 5-phosphate. It functions in the pathway amino-acid biosynthesis; L-tryptophan biosynthesis; L-tryptophan from chorismate: step 3/5. This chain is N-(5'-phosphoribosyl)anthranilate isomerase, found in Lachnoclostridium phytofermentans (strain ATCC 700394 / DSM 18823 / ISDg) (Clostridium phytofermentans).